The primary structure comprises 370 residues: Putative glutamate--cysteine ligase 2 (370 aa).

Belongs to the glutamate--cysteine ligase type 2 family. YbdK subfamily.

It catalyses the reaction L-cysteine + L-glutamate + ATP = gamma-L-glutamyl-L-cysteine + ADP + phosphate + H(+). ATP-dependent carboxylate-amine ligase which exhibits weak glutamate--cysteine ligase activity. In Janthinobacterium sp. (strain Marseille) (Minibacterium massiliensis), this protein is Putative glutamate--cysteine ligase 2.